Here is a 269-residue protein sequence, read N- to C-terminus: NAD kinase (269 aa).

The Proton acceptor role is filled by Asp45. Residues 45–46, 122–123, Arg149, Asp151, and Ala186 each bind NAD(+); these read DG and NE.

This sequence belongs to the NAD kinase family. It depends on a divalent metal cation as a cofactor.

It localises to the cytoplasm. It carries out the reaction NAD(+) + ATP = ADP + NADP(+) + H(+). Its function is as follows. Involved in the regulation of the intracellular balance of NAD and NADP, and is a key enzyme in the biosynthesis of NADP. Catalyzes specifically the phosphorylation on 2'-hydroxyl of the adenosine moiety of NAD to yield NADP. This Staphylococcus epidermidis (strain ATCC 35984 / DSM 28319 / BCRC 17069 / CCUG 31568 / BM 3577 / RP62A) protein is NAD kinase.